A 557-amino-acid chain; its full sequence is Dihydroxy-acid dehydratase (557 aa).

A Mg(2+)-binding site is contributed by D78. Position 119 (C119) interacts with [2Fe-2S] cluster. Residues D120 and K121 each coordinate Mg(2+). K121 bears the N6-carboxylysine mark. Residue C192 participates in [2Fe-2S] cluster binding. Position 442 (E442) interacts with Mg(2+). Residue S468 is the Proton acceptor of the active site.

Belongs to the IlvD/Edd family. As to quaternary structure, homodimer. [2Fe-2S] cluster serves as cofactor. The cofactor is Mg(2+).

The catalysed reaction is (2R)-2,3-dihydroxy-3-methylbutanoate = 3-methyl-2-oxobutanoate + H2O. It catalyses the reaction (2R,3R)-2,3-dihydroxy-3-methylpentanoate = (S)-3-methyl-2-oxopentanoate + H2O. Its pathway is amino-acid biosynthesis; L-isoleucine biosynthesis; L-isoleucine from 2-oxobutanoate: step 3/4. It functions in the pathway amino-acid biosynthesis; L-valine biosynthesis; L-valine from pyruvate: step 3/4. Its function is as follows. Functions in the biosynthesis of branched-chain amino acids. Catalyzes the dehydration of (2R,3R)-2,3-dihydroxy-3-methylpentanoate (2,3-dihydroxy-3-methylvalerate) into 2-oxo-3-methylpentanoate (2-oxo-3-methylvalerate) and of (2R)-2,3-dihydroxy-3-methylbutanoate (2,3-dihydroxyisovalerate) into 2-oxo-3-methylbutanoate (2-oxoisovalerate), the penultimate precursor to L-isoleucine and L-valine, respectively. In Bacillus cereus (strain G9842), this protein is Dihydroxy-acid dehydratase.